The chain runs to 231 residues: Phosphatidylserine decarboxylase proenzyme (231 aa).

S188 (schiff-base intermediate with substrate; via pyruvic acid) is an active-site residue. Residue S188 is modified to Pyruvic acid (Ser); by autocatalysis.

This sequence belongs to the phosphatidylserine decarboxylase family. PSD-A subfamily. As to quaternary structure, heterodimer of a large membrane-associated beta subunit and a small pyruvoyl-containing alpha subunit. The cofactor is pyruvate. Post-translationally, is synthesized initially as an inactive proenzyme. Formation of the active enzyme involves a self-maturation process in which the active site pyruvoyl group is generated from an internal serine residue via an autocatalytic post-translational modification. Two non-identical subunits are generated from the proenzyme in this reaction, and the pyruvate is formed at the N-terminus of the alpha chain, which is derived from the carboxyl end of the proenzyme. The post-translation cleavage follows an unusual pathway, termed non-hydrolytic serinolysis, in which the side chain hydroxyl group of the serine supplies its oxygen atom to form the C-terminus of the beta chain, while the remainder of the serine residue undergoes an oxidative deamination to produce ammonia and the pyruvoyl prosthetic group on the alpha chain.

It localises to the cell membrane. The catalysed reaction is a 1,2-diacyl-sn-glycero-3-phospho-L-serine + H(+) = a 1,2-diacyl-sn-glycero-3-phosphoethanolamine + CO2. It participates in phospholipid metabolism; phosphatidylethanolamine biosynthesis; phosphatidylethanolamine from CDP-diacylglycerol: step 2/2. In terms of biological role, catalyzes the formation of phosphatidylethanolamine (PtdEtn) from phosphatidylserine (PtdSer). The chain is Phosphatidylserine decarboxylase proenzyme from Rickettsia rickettsii (strain Iowa).